We begin with the raw amino-acid sequence, 305 residues long: Probable aspartoacylase (305 aa).

Positions 13 and 16 each coordinate Zn(2+). Substrate contacts are provided by residues Arg-55 and 62–63 (NR). His-105 provides a ligand contact to Zn(2+). The substrate site is built by Glu-163 and Tyr-273.

The protein belongs to the AspA/AstE family. Aspartoacylase subfamily. Zn(2+) is required as a cofactor.

It carries out the reaction an N-acyl-L-aspartate + H2O = a carboxylate + L-aspartate. This is Probable aspartoacylase from Prochlorococcus marinus (strain NATL2A).